The chain runs to 268 residues: Secreted RxLR effector protein 5 (268 aa).

Positions 1-21 (MRGAFYMAITLFLARSRSATA) are cleaved as a signal peptide. Positions 48-63 (RYLRDGLALSAANEER) match the RxLR-dEER motif. A glycan (N-linked (GlcNAc...) asparagine) is linked at Asn104.

It belongs to the RxLR effector family.

It is found in the secreted. The protein localises to the host nucleus. Effector that acts as a broad suppressor of cell death to interrupt plant immunity. Inhibits cell death induced by cell death-inducing proteins, including the PAMP elicitor INF1 from P.infestans. The polypeptide is Secreted RxLR effector protein 5 (Plasmopara viticola (Downy mildew of grapevine)).